Reading from the N-terminus, the 490-residue chain is Bifunctional dihydrocamalexate synthase/camalexin synthase (490 aa).

Residues 1–21 (MSVFLCFLVLLPLILIFLNVL) form a helical membrane-spanning segment.

It belongs to the cytochrome P450 family.

The protein localises to the membrane. It carries out the reaction 2-(L-cystein-S-yl)-2-(1H-indol-3-yl)-acetonitrile + 2 reduced [NADPH--hemoprotein reductase] + 2 O2 = camalexin + hydrogen cyanide + 2 oxidized [NADPH--hemoprotein reductase] + CO2 + 4 H2O + 2 H(+). The enzyme catalyses 2-(L-cystein-S-yl)-2-(1H-indol-3-yl)-acetonitrile + reduced [NADPH--hemoprotein reductase] + O2 = (R)-dihydrocamalexate + hydrogen cyanide + oxidized [NADPH--hemoprotein reductase] + 2 H2O + 2 H(+). The catalysed reaction is (R)-dihydrocamalexate + reduced [NADPH--hemoprotein reductase] + O2 = camalexin + oxidized [NADPH--hemoprotein reductase] + CO2 + 2 H2O. Its function is as follows. Multifunctional enzyme involved in the biosynthesis of the indole-derived phytoalexin camalexin. Catalyzes two reactions, the formation of dihydrocamalexate from indole-3-acetonitrile-cysteine conjugate and the oxidative decarboxylation of dihydrocamalexate which is the final step in camalexin biosynthesis. Required for the resistance to the fungal pathogens A.brassicicola, B.cinerea, B.elliptica, B.tulipae, L.maculans and Colletotrichum higginsianum. Seems not to be required for resistance to P.syringae, P.porri, and not involved in age-related resistance. The sequence is that of Bifunctional dihydrocamalexate synthase/camalexin synthase (CYP71B15) from Arabidopsis thaliana (Mouse-ear cress).